We begin with the raw amino-acid sequence, 187 residues long: Serine/arginine-rich splicing factor RSZ21 (187 aa).

Positions Thr-2–Lys-73 constitute an RRM domain. 2 disordered regions span residues Leu-68 to Ser-89 and Arg-105 to Val-187. Residues Ser-89 to Arg-106 form a CCHC-type zinc finger. Positions Gly-107–Arg-122 are enriched in basic residues. A phosphoserine mark is found at Ser-123, Ser-132, Ser-134, Ser-140, Ser-146, and Ser-159. Basic residues predominate over residues Arg-136 to Ser-155. Residues Ser-165 to Tyr-177 show a composition bias toward basic and acidic residues. Residues Gly-178–Val-187 show a composition bias toward low complexity. Ser-181 carries the post-translational modification Phosphoserine.

This sequence belongs to the splicing factor SR family. RSZ subfamily. In terms of assembly, component of the spliceosome. Interacts with SNRNP35, AFC2, CYP59, RS2Z33 and RNU1. Interacts with MOS14. Extensively phosphorylated on serine residues in the RS domain. Phosphorylated by AFC2. In terms of tissue distribution, expressed in roots, leaves, flowers and siliques.

It is found in the nucleus speckle. Probably involved in intron recognition and spliceosome assembly. This is Serine/arginine-rich splicing factor RSZ21 (RSZ21) from Arabidopsis thaliana (Mouse-ear cress).